Consider the following 332-residue polypeptide: Glyceraldehyde-3-phosphate dehydrogenase 3 (332 aa).

Residues Arg11, Ile12, and Asp33 each contribute to the NAD(+) site. Glycyl lysine isopeptide (Lys-Gly) (interchain with G-Cter in ubiquitin) cross-links involve residues Lys46 and Lys63. Thr120 is a binding site for NAD(+). Ser149–Thr151 is a binding site for D-glyceraldehyde 3-phosphate. Cys150 (nucleophile) is an active-site residue. Cys150 and Cys154 each carry cysteine persulfide. A Glycyl lysine isopeptide (Lys-Gly) (interchain with G-Cter in URM1) cross-link involves residue Lys160. Residues Thr180, Thr209–Gly210, and Arg232 contribute to the D-glyceraldehyde 3-phosphate site. Ser302 carries the post-translational modification Phosphoserine. A Glycyl lysine isopeptide (Lys-Gly) (interchain with G-Cter in URM1) cross-link involves residue Lys307. NAD(+)-binding residues include Asn314 and Tyr318.

It belongs to the glyceraldehyde-3-phosphate dehydrogenase family. Homotetramer. In terms of processing, conjugated to URM1, a ubiquitin-like protein, in response to oxidative stresses. The attachment of URM1 to lysine residues exclusively depends on the presence of a peroxidatic cysteine in the target protein, with low specificity for the particular residue, motif, or structural context at which urmylation can occur. The URM1-conjugation reaction is mechanistically and directly coupled to the process of cysteine persulfidation, transfering the sulfur atom of the URM1 thiocarboxyl group to redox-active cysteine residues in the target protein if it is exposed to oxidative conditions. Persulfidated on specific redox-active cysteine residues. Persulfidation (also called protein S-sulfhydration) may provide a molecular mechanism that enables cells to protect vulnerable cysteine residues from reactive oxygen species (ROS) under stress conditions.

The protein resides in the cytoplasm. The protein localises to the mitochondrion. The enzyme catalyses D-glyceraldehyde 3-phosphate + phosphate + NAD(+) = (2R)-3-phospho-glyceroyl phosphate + NADH + H(+). It carries out the reaction NADH + H2O = (6R)-NADHX. It catalyses the reaction NADH + H2O = (6S)-NADHX. The catalysed reaction is NADPH + H2O = (6R)-NADPHX. The enzyme catalyses NADPH + H2O = (6S)-NADPHX. Its pathway is carbohydrate degradation; glycolysis; pyruvate from D-glyceraldehyde 3-phosphate: step 1/5. Glyceraldehyde-3-phosphate dehydrogenase (GAPDH) involved in glycolysis and gluconeogenesis. Catalyzes the reaction of glyceraldehyde-3-phosphate to 1,3 bis-phosphoglycerate. The contribution of the TDH1, TDH2, and TDH3 to the total glyceraldehyde-3-phosphate dehydrogenase activity is 10-15, 25-30, and 50-60%, respectively. Functionally, as a side activity, catalyzes the hydration of the nicotinamide ring of NADH or NADPH at the C6 position to give the corresponding hydrates, NADHX and NADPHX, which exist as R and S epimers, that cannot act as electron donors or acceptors and inhibit several dehydrogenases, making them toxic. This Saccharomyces cerevisiae (strain ATCC 204508 / S288c) (Baker's yeast) protein is Glyceraldehyde-3-phosphate dehydrogenase 3.